The primary structure comprises 818 residues: Protein LDB19 (818 aa).

Residues 1–25 (MAFSRLTSTHQSNHNGYSNSNKKGQ) form a disordered region. Thr93 carries the phosphothreonine modification. Over residues 352–361 (QVKIKESEKS) the composition is skewed to basic and acidic residues. A disordered region spans residues 352–374 (QVKIKESEKSKKPRSHIKRYGEL). At Ser384 the chain carries Phosphoserine. The tract at residues 388-436 (MPSQRLPGEPGREQAPNSSGPASTGNVGLDDENPVNEDEEDQPGSEFIH) is disordered. The span at 402-413 (APNSSGPASTGN) shows a compositional bias: polar residues. Acidic residues predominate over residues 416 to 430 (LDDENPVNEDEEDQP). Lys486 is covalently cross-linked (Glycyl lysine isopeptide (Lys-Gly) (interchain with G-Cter in ubiquitin)). 2 disordered regions span residues 568 to 590 (QPIR…NVHN) and 607 to 644 (TPKV…NSNI). Thr619 is modified (phosphothreonine). Over residues 620–629 (PVNSNKSNHS) the composition is skewed to polar residues. Ser808 is modified (phosphoserine).

This sequence belongs to the LDB19 family.

It localises to the cytoplasm. Its subcellular location is the golgi apparatus. May be involved in protein-linked oligosaccharide phosphorylation since the deletion reduces the negative charge of the cell surface. Involved in the resistance to EDTA, cadmium chloride, cycloheximide, 6-dimethylaminopurine, methyl caffeate, beta-chloro-L-alanine, caffeine and cerulenin. This chain is Protein LDB19 (LDB19), found in Saccharomyces cerevisiae (strain ATCC 204508 / S288c) (Baker's yeast).